A 72-amino-acid polypeptide reads, in one-letter code: Translation initiation factor IF-1 (72 aa).

Residues 1 to 72 (MAKEDVIEVE…NRGRIVYRYK (72 aa)) form the S1-like domain.

The protein belongs to the IF-1 family. In terms of assembly, component of the 30S ribosomal translation pre-initiation complex which assembles on the 30S ribosome in the order IF-2 and IF-3, IF-1 and N-formylmethionyl-tRNA(fMet); mRNA recruitment can occur at any time during PIC assembly.

Its subcellular location is the cytoplasm. In terms of biological role, one of the essential components for the initiation of protein synthesis. Stabilizes the binding of IF-2 and IF-3 on the 30S subunit to which N-formylmethionyl-tRNA(fMet) subsequently binds. Helps modulate mRNA selection, yielding the 30S pre-initiation complex (PIC). Upon addition of the 50S ribosomal subunit IF-1, IF-2 and IF-3 are released leaving the mature 70S translation initiation complex. The chain is Translation initiation factor IF-1 from Moorella thermoacetica (strain ATCC 39073 / JCM 9320).